A 299-amino-acid chain; its full sequence is Coenzyme PQQ synthesis protein B (299 aa).

This sequence belongs to the PqqB family.

Its pathway is cofactor biosynthesis; pyrroloquinoline quinone biosynthesis. May be involved in the transport of PQQ or its precursor to the periplasm. The protein is Coenzyme PQQ synthesis protein B of Methylorubrum extorquens (strain CM4 / NCIMB 13688) (Methylobacterium extorquens).